A 385-amino-acid polypeptide reads, in one-letter code: 4-hydroxy-3-methylbut-2-en-1-yl diphosphate synthase (flavodoxin) 1 (385 aa).

Residues C280, C283, C315, and E322 each coordinate [4Fe-4S] cluster.

It belongs to the IspG family. [4Fe-4S] cluster serves as cofactor.

The enzyme catalyses (2E)-4-hydroxy-3-methylbut-2-enyl diphosphate + oxidized [flavodoxin] + H2O + 2 H(+) = 2-C-methyl-D-erythritol 2,4-cyclic diphosphate + reduced [flavodoxin]. The protein operates within isoprenoid biosynthesis; isopentenyl diphosphate biosynthesis via DXP pathway; isopentenyl diphosphate from 1-deoxy-D-xylulose 5-phosphate: step 5/6. Its function is as follows. Converts 2C-methyl-D-erythritol 2,4-cyclodiphosphate (ME-2,4cPP) into 1-hydroxy-2-methyl-2-(E)-butenyl 4-diphosphate. The polypeptide is 4-hydroxy-3-methylbut-2-en-1-yl diphosphate synthase (flavodoxin) 1 (Streptomyces avermitilis (strain ATCC 31267 / DSM 46492 / JCM 5070 / NBRC 14893 / NCIMB 12804 / NRRL 8165 / MA-4680)).